Reading from the N-terminus, the 268-residue chain is 3-deoxy-manno-octulosonate cytidylyltransferase (268 aa).

Belongs to the KdsB family.

Its subcellular location is the cytoplasm. It carries out the reaction 3-deoxy-alpha-D-manno-oct-2-ulosonate + CTP = CMP-3-deoxy-beta-D-manno-octulosonate + diphosphate. It functions in the pathway nucleotide-sugar biosynthesis; CMP-3-deoxy-D-manno-octulosonate biosynthesis; CMP-3-deoxy-D-manno-octulosonate from 3-deoxy-D-manno-octulosonate and CTP: step 1/1. It participates in bacterial outer membrane biogenesis; lipopolysaccharide biosynthesis. Functionally, activates KDO (a required 8-carbon sugar) for incorporation into bacterial lipopolysaccharide in Gram-negative bacteria. The protein is 3-deoxy-manno-octulosonate cytidylyltransferase of Psychrobacter cryohalolentis (strain ATCC BAA-1226 / DSM 17306 / VKM B-2378 / K5).